The following is a 132-amino-acid chain: Small ribosomal subunit protein eS12 (132 aa).

It belongs to the eukaryotic ribosomal protein eS12 family.

The sequence is that of Small ribosomal subunit protein eS12 (rps12) from Oreochromis niloticus (Nile tilapia).